The chain runs to 95 residues: Suppressor of silencing 2b (95 aa).

The tract at residues 8-18 (LHEIIRKLERM) is homotetramerization. The stretch at 8–40 (LHEIIRKLERMNQKKQAQRKRHKLNRKERGHKS) forms a coiled coil. Residues 16–49 (ERMNQKKQAQRKRHKLNRKERGHKSPSEQRRSEL) form a disordered region. Positions 23–37 (QAQRKRHKLNRKERG) are enriched in basic residues. Residues 26 to 30 (RKRHK) carry the Nuclear localization signal motif. A compositionally biased stretch (basic and acidic residues) spans 38-49 (HKSPSEQRRSEL).

The protein belongs to the cucumovirus/ilarvirus protein 2b family. In terms of assembly, homodimer. Homotetramer (dimer of dimers).

The protein resides in the host nucleus. Acts as a suppressor of RNA-mediated gene silencing, also known as post-transcriptional gene silencing (PTGS), a mechanism of plant viral defense that limits the accumulation of viral RNAs. Forms a homodimer to measure siRNA duplex in a length-preference mode. Binds to both siRNA duplexes (19bp) and long siRNA duplexes (30bp). This chain is Suppressor of silencing 2b, found in Canna (Florist's daisy).